We begin with the raw amino-acid sequence, 293 residues long: Probable endonuclease 4 (293 aa).

Zn(2+) contacts are provided by histidine 78, histidine 118, glutamate 154, aspartate 188, histidine 191, histidine 225, aspartate 238, histidine 240, and glutamate 270.

It belongs to the AP endonuclease 2 family. Zn(2+) is required as a cofactor.

The enzyme catalyses Endonucleolytic cleavage to 5'-phosphooligonucleotide end-products.. Its function is as follows. Endonuclease IV plays a role in DNA repair. It cleaves phosphodiester bonds at apurinic or apyrimidinic (AP) sites, generating a 3'-hydroxyl group and a 5'-terminal sugar phosphate. This Vibrio vulnificus (strain CMCP6) protein is Probable endonuclease 4.